The sequence spans 375 residues: METSSGTPELKVISTPTYGGHYVKYVVAGTDFEVTARYKPPLRPIGRGAYGIVCSLFDTVTGEEVAVKKIGNAFDNRIDAKRTLREIKLLRHMDHENVVAITDIIRPPTRENFNDVYIVYELMDTDLHQIIRSNQALTEDHCQYFLYQILRGLKYIHSANVLHRDLKPTNLLVNANCDLKIADFGLARTLSETDFMTEYVVTRWYRAPELLLNCSAYTAAIDIWSVGCIFMELLNRSALFPGRDYVHQLRLITELIGTPEDRDLGFLRSDNARRYIKHLPRQSPIPLTQKFRGINRSALDLVEKMLVFDPAKRITVEAALAHPYLASLHDINDEPASVSPFEFDFEEPSISEEHIKDLIWREALDCSLGPDDMVQ.

The region spanning 39–325 (KPPLRPIGRG…VEAALAHPYL (287 aa)) is the Protein kinase domain. ATP is bound by residues 45-53 (IGRGAYGIV) and Lys68. The active-site Proton acceptor is Asp165. Thr197 carries the post-translational modification Phosphothreonine. Residues 197-199 (TEY) carry the TXY motif. The residue at position 199 (Tyr199) is a Phosphotyrosine.

Belongs to the protein kinase superfamily. CMGC Ser/Thr protein kinase family. MAP kinase subfamily. Mg(2+) serves as cofactor. Post-translationally, dually phosphorylated on Thr-197 and Tyr-199, which activates the enzyme. Phosphorylated in response to pathogen-associated molecular pattern (PAMP) chitin and in response to necrotrophic fungus B.cinerea spores. Not phosphorylated in response to osmotic stress. Expressed strongly in the apical cells of caulonemal air filaments and rhizoids in fully developed plants and less strongly, but readily detectable in filamentous protonemal tissue at the edge of the plant consisting of both chloronema and caulonema. When filamentous growth of protonema is promoted, the expression is strongest in newly formed apical tip cells of protonemal tissue.

It is found in the cytoplasm. The protein resides in the nucleus. It carries out the reaction L-seryl-[protein] + ATP = O-phospho-L-seryl-[protein] + ADP + H(+). The catalysed reaction is L-threonyl-[protein] + ATP = O-phospho-L-threonyl-[protein] + ADP + H(+). Its activity is regulated as follows. Activated by threonine and tyrosine phosphorylation. Activated in response to bacterial and fungal pathogen-associated molecular patterns (PAMPs) including chitin, chitosan and peptidyl glycans (PGNs). Activation in response to chitin requires the CERK1, MEKK1a/b, MKK1a/b/c and MPK4a/b signaling pathway. Activated in response to necrotrophic fungus B.cinerea spores. Not activated in response to osmotic stress. In terms of biological role, the CERK1, MEKK1a/b, MKK1a/b/c and MPK4a/b proteins are involved in pathogen defense. The pathway induces rapid growth inhibition, cell wall depositions and accumulation of defense-related transcripts. This protein is required for innate immunity triggered by pathogen-associated molecular patterns (PAMPs). Involved in resistance to necrotrophic fungi B.cinerea and A.brassicicola. Involved in the transduction of signals from chitosan perception to the activation of defense genes. The polypeptide is Mitogen-activated protein kinase 4a (MPK4a) (Physcomitrium patens (Spreading-leaved earth moss)).